The sequence spans 298 residues: Ribosomal RNA small subunit methyltransferase A (298 aa).

S-adenosyl-L-methionine is bound by residues Asn-30, Val-32, Gly-57, Glu-78, Asp-108, and Asn-126.

This sequence belongs to the class I-like SAM-binding methyltransferase superfamily. rRNA adenine N(6)-methyltransferase family. RsmA subfamily.

The protein resides in the cytoplasm. It catalyses the reaction adenosine(1518)/adenosine(1519) in 16S rRNA + 4 S-adenosyl-L-methionine = N(6)-dimethyladenosine(1518)/N(6)-dimethyladenosine(1519) in 16S rRNA + 4 S-adenosyl-L-homocysteine + 4 H(+). Specifically dimethylates two adjacent adenosines (A1518 and A1519) in the loop of a conserved hairpin near the 3'-end of 16S rRNA in the 30S particle. May play a critical role in biogenesis of 30S subunits. The protein is Ribosomal RNA small subunit methyltransferase A of Cutibacterium acnes (strain DSM 16379 / KPA171202) (Propionibacterium acnes).